Here is a 177-residue protein sequence, read N- to C-terminus: Plasmid transfer protein TraF (177 aa).

The signal sequence occupies residues 1–30; it reads MSRFQRLTKYVAIGGGAALLLAGAAYLAGA.

This sequence belongs to the peptidase S26C family.

Its subcellular location is the periplasm. Required for donor-specific phage sensitivity. May be involved in pilus assembly. The sequence is that of Plasmid transfer protein TraF (traF) from Escherichia coli.